A 500-amino-acid polypeptide reads, in one-letter code: Carnosic acid synthase (500 aa).

A helical membrane pass occupies residues 4 to 24; the sequence is LILLSLAFLASCVVAYSRRRP. C443 serves as a coordination point for heme.

The protein belongs to the cytochrome P450 family. Heme serves as cofactor. As to expression, expressed in leaf glandular trichomes.

It is found in the membrane. The enzyme catalyses 11-hydroxyferruginol + 3 reduced [NADPH--hemoprotein reductase] + 3 O2 = carnosate + 3 oxidized [NADPH--hemoprotein reductase] + 4 H2O + 4 H(+). It carries out the reaction miltiradiene + 2 reduced [NADPH--hemoprotein reductase] + 2 O2 = miltiradien-20-al + 2 oxidized [NADPH--hemoprotein reductase] + 3 H2O + 2 H(+). The catalysed reaction is ferruginol + 3 reduced [NADPH--hemoprotein reductase] + 3 O2 = pisiferate + 3 oxidized [NADPH--hemoprotein reductase] + 4 H2O + 4 H(+). The protein operates within secondary metabolite biosynthesis; terpenoid biosynthesis. Monooxygenase involved in the biosynthesis of carnosate, a potent antioxidant labdane-related diterpene natural product. Catalyzes the oxidation of 11-hydroxyferruginol to produce carnosate. Mediates the conversion of miltiradien into miltiradien-20-al. Also involved in the production of pisiferic acid and derivative products from ferruginol. This is Carnosic acid synthase from Salvia pomifera (Apple sage).